The chain runs to 144 residues: MIALIQRVSEASVRVDGEITGEINQGLLILLGVEREDDEAKAKRLVERVLTYRIFEDDEGKMNLNVQQVNGSVLVVSQFTLPADTKKGTRPGFSKGANPIDAERLYDHFSDLCDEKLTTQRGRFAADMKVSLVNDGPVTFWLQV.

The Gly-cisPro motif, important for rejection of L-amino acids motif lies at 136–137 (GP).

This sequence belongs to the DTD family. Homodimer.

It localises to the cytoplasm. It carries out the reaction glycyl-tRNA(Ala) + H2O = tRNA(Ala) + glycine + H(+). It catalyses the reaction a D-aminoacyl-tRNA + H2O = a tRNA + a D-alpha-amino acid + H(+). Its function is as follows. An aminoacyl-tRNA editing enzyme that deacylates mischarged D-aminoacyl-tRNAs. Also deacylates mischarged glycyl-tRNA(Ala), protecting cells against glycine mischarging by AlaRS. Acts via tRNA-based rather than protein-based catalysis; rejects L-amino acids rather than detecting D-amino acids in the active site. By recycling D-aminoacyl-tRNA to D-amino acids and free tRNA molecules, this enzyme counteracts the toxicity associated with the formation of D-aminoacyl-tRNA entities in vivo and helps enforce protein L-homochirality. This Aliivibrio salmonicida (strain LFI1238) (Vibrio salmonicida (strain LFI1238)) protein is D-aminoacyl-tRNA deacylase.